Here is a 376-residue protein sequence, read N- to C-terminus: Glucose-1-phosphate adenylyltransferase (376 aa).

Alpha-D-glucose 1-phosphate contacts are provided by residues Tyr-101, Gly-166, 181–182 (EK), and Ser-192.

It belongs to the bacterial/plant glucose-1-phosphate adenylyltransferase family. Homotetramer.

It carries out the reaction alpha-D-glucose 1-phosphate + ATP + H(+) = ADP-alpha-D-glucose + diphosphate. It participates in glycan biosynthesis; glycogen biosynthesis. Its function is as follows. Involved in the biosynthesis of ADP-glucose, a building block required for the elongation reactions to produce glycogen. Catalyzes the reaction between ATP and alpha-D-glucose 1-phosphate (G1P) to produce pyrophosphate and ADP-Glc. The protein is Glucose-1-phosphate adenylyltransferase of Bacillus cereus (strain Q1).